The sequence spans 316 residues: GMP reductase (316 aa).

Cys175 functions as the Thioimidate intermediate in the catalytic mechanism. Residue 202 to 225 (VIADGGIVEHGDIAKALVCGATMV) participates in NADP(+) binding.

This sequence belongs to the IMPDH/GMPR family. GuaC type 2 subfamily.

It carries out the reaction IMP + NH4(+) + NADP(+) = GMP + NADPH + 2 H(+). In terms of biological role, catalyzes the irreversible NADPH-dependent deamination of GMP to IMP. It functions in the conversion of nucleobase, nucleoside and nucleotide derivatives of G to A nucleotides, and in maintaining the intracellular balance of A and G nucleotides. The polypeptide is GMP reductase (Chromobacterium violaceum (strain ATCC 12472 / DSM 30191 / JCM 1249 / CCUG 213 / NBRC 12614 / NCIMB 9131 / NCTC 9757 / MK)).